We begin with the raw amino-acid sequence, 131 residues long: Large ribosomal subunit protein bL17 (131 aa).

Belongs to the bacterial ribosomal protein bL17 family. In terms of assembly, part of the 50S ribosomal subunit. Contacts protein L32.

The polypeptide is Large ribosomal subunit protein bL17 (Vesicomyosocius okutanii subsp. Calyptogena okutanii (strain HA)).